The sequence spans 187 residues: ECF RNA polymerase sigma factor SigK (187 aa).

The interval 30 to 96 is sigma-70 factor domain-2; sequence YDHTKSRVYG…RAVDRVRCEQ (67 aa). The Interaction with polymerase core subunit RpoC signature appears at 53–56; that stretch reads ETTQ. Residues 133-182 are sigma-70 factor domain-4; it reads CLKALTDTQRQCIELAYYGGLTYVEVSRRLAANLSTIKSRMRDALRSLRN. Positions 155 to 174 form a DNA-binding region, H-T-H motif; sequence YVEVSRRLAANLSTIKSRMR.

Belongs to the sigma-70 factor family. ECF subfamily. In terms of assembly, interacts transiently with the RNA polymerase catalytic core formed by RpoA, RpoB, RpoC and RpoZ (2 alpha, 1 beta, 1 beta' and 1 omega subunit) to form the RNA polymerase holoenzyme that can initiate transcription. Interacts (via sigma-70 factor domain 4) with anti-sigma-K factor RskA.

In terms of biological role, sigma factors are initiation factors that promote the attachment of RNA polymerase to specific initiation sites and are then released. Extracytoplasmic function (ECF) sigma factors are held in an inactive form by an anti-sigma factor until released by regulated intramembrane proteolysis. This is ECF RNA polymerase sigma factor SigK (sigK) from Mycobacterium tuberculosis (strain ATCC 25177 / H37Ra).